Reading from the N-terminus, the 129-residue chain is Follitropin subunit beta (129 aa).

The first 20 residues, 1 to 20 (MKSVQFCFLFCCWRAICCRS), serve as a signal peptide directing secretion. 6 disulfides stabilise this stretch: Cys21-Cys69, Cys35-Cys84, Cys38-Cys122, Cys46-Cys100, Cys50-Cys102, and Cys105-Cys112. N-linked (GlcNAc...) asparagine glycans are attached at residues Asn25 and Asn42.

This sequence belongs to the glycoprotein hormones subunit beta family. As to quaternary structure, heterodimer. The active follitropin is a heterodimer composed of an alpha chain/CGA shared with other hormones and a unique beta chain/FSHB shown here.

It localises to the secreted. In terms of biological role, together with the alpha chain CGA constitutes follitropin, the follicle-stimulating hormone, and provides its biological specificity to the hormone heterodimer. Binds FSHR, a G protein-coupled receptor, on target cells to activate downstream signaling pathways. Follitropin is involved in follicle development and spermatogenesis in reproductive organs. This Bubalus bubalis (Domestic water buffalo) protein is Follitropin subunit beta (FSHB).